We begin with the raw amino-acid sequence, 11103 residues long: Colossin-A (11103 aa).

The first 35 residues, 1–35 (MGTIKTKFKNNYLKNSYLFIIYIILFNLVIGIANS), serve as a signal peptide directing secretion. N-linked (GlcNAc...) asparagine glycosylation is found at Asn-95, Asn-120, Asn-137, and Asn-198. The stretch at 273–324 (NLFAVGNYVFFDVNRDGVHETTELFAPNVKVELYDAISSTRLIASTFTDLNG) is one Kelch 1 repeat. Residues 298-359 (APNVKVELYD…SNGPDNVINA (62 aa)) enclose the CNA-B 1 domain. Asn-372, Asn-386, and Asn-422 each carry an N-linked (GlcNAc...) asparagine glycan. The CNA-B 2 domain occupies 423–469 (LSGITVQLTTPSHVVLKTAQTDYAGNYVFDDLSEGVYSVHFILPENY). The N-linked (GlcNAc...) asparagine glycan is linked to Asn-493. 6 CNA-B domains span residues 551–599 (LPGV…PDGY), 676–745 (VANV…INLT), 803–871 (APFV…FTLN), 931–999 (AEGV…IDLS), 1057–1095 (LPNI…EGDY), and 1170–1231 (LSNT…FNSS). Asn-678 carries an N-linked (GlcNAc...) asparagine glycan. N-linked (GlcNAc...) asparagine glycosylation is found at Asn-1059, Asn-1229, and Asn-1239. Positions 1277–1314 (ISNIPLSLISQKTNQIISSVVTDSNGKYQFEDVPPGDY) constitute a CNA-B 9 domain. An N-linked (GlcNAc...) asparagine glycan is attached at Asn-1329. 8 CNA-B domains span residues 1391 to 1458 (SDVS…FKLT), 1494 to 1530 (LPGV…PGDY), 1602 to 1651 (LPGV…YKQV), 1708 to 1779 (LSDI…VTVK), 1824 to 1891 (SDVS…FKLT), 1927 to 1963 (LPGV…PGDY), 2035 to 2086 (LPGV…QVAQ), and 2141 to 2177 (VEGI…PGDY). N-linked (GlcNAc...) asparagine glycosylation occurs at Asn-1613. Residues 1716–1740 (TDKDGNEISNTKSGPDGKYQFEDVP) form a disordered region. Residues Asn-1759 and Asn-1772 are each glycosylated (N-linked (GlcNAc...) asparagine). Asn-2046 carries N-linked (GlcNAc...) asparagine glycosylation. Residues Asn-2192 and Asn-2311 are each glycosylated (N-linked (GlcNAc...) asparagine). CNA-B domains follow at residues 2254–2321 (SDVS…FKLT), 2357–2402 (LPGV…TPIG), 2465–2514 (LPGV…YKQV), 2571–2640 (LSDI…NFVT), 2687–2754 (SDVS…FKLT), 2790–2835 (LPGV…TPIG), 2898–2947 (LPGV…YKQV), and 3004–3040 (LEGI…PGDY). Asn-2476 carries N-linked (GlcNAc...) asparagine glycosylation. A disordered region spans residues 2580 to 2603 (DKDGNEITNTKSGPDGKYQFEDVP). Asn-2622 carries N-linked (GlcNAc...) asparagine glycosylation. N-linked (GlcNAc...) asparagine glycosylation is found at Asn-2801 and Asn-2909. N-linked (GlcNAc...) asparagine glycosylation is found at Asn-3048, Asn-3055, and Asn-3118. 4 CNA-B domains span residues 3117–3184 (SNVS…FKLT), 3220–3256 (LPGV…PGDY), 3328–3364 (LPGV…PGSY), and 3434–3470 (VEGI…PGDY). Residue Asn-3339 is glycosylated (N-linked (GlcNAc...) asparagine). The N-linked (GlcNAc...) asparagine glycan is linked to Asn-3485. The Kelch 2 repeat unit spans residues 3503–3549 (SCFAVSGPLDNQNLGLSLFYEIGTMVWIDSNNNGKFEQPSDVLKSDV). 3 CNA-B domains span residues 3547 to 3614 (SDVS…FKLT), 3650 to 3686 (LPGV…PGDY), and 3758 to 3809 (LPGV…QVAQ). Residues Asn-3769 and Asn-3827 are each glycosylated (N-linked (GlcNAc...) asparagine). The CNA-B 33 domain occupies 3864 to 3900 (LSDITIRLTDKDGKVIQSTTSGPDGKYQFEDVPPGDY). A glycan (N-linked (GlcNAc...) asparagine) is linked at Asn-3915. CNA-B domains lie at 3980 to 4047 (SDVS…FKLT), 4083 to 4128 (LPGV…TPIG), 4191 to 4240 (LPGV…YKQV), 4297 to 4378 (LSDI…NFVT), 4425 to 4492 (SDVS…FKLT), 4528 to 4573 (LPGV…TPIG), 4636 to 4685 (LPGV…YKQV), and 4742 to 4778 (VEGI…PGDY). N-linked (GlcNAc...) asparagine glycosylation occurs at Asn-4202. Residues 4286–4341 (NTGKQTDDSPPLSDITIRLTDKDGNEITKTKSRPDGNENSNTKSGPDGKYQFEDVP) are disordered. Basic and acidic residues predominate over residues 4304 to 4321 (LTDKDGNEITKTKSRPDG). The N-linked (GlcNAc...) asparagine glycan is linked to Asn-4360. Asn-4647 carries N-linked (GlcNAc...) asparagine glycosylation. Asn-4792 and Asn-4918 each carry an N-linked (GlcNAc...) asparagine glycan. 4 consecutive CNA-B domains span residues 4865-4928 (ITLT…FKLT), 4964-5009 (LPGV…TPIG), 5072-5123 (LPGV…QVAQ), and 5178-5214 (LEGI…PGDY). Residue Asn-5083 is glycosylated (N-linked (GlcNAc...) asparagine). N-linked (GlcNAc...) asparagine glycosylation is found at Asn-5229, Asn-5292, and Asn-5348. One copy of the Kelch 3 repeat lies at 5247-5293 (SCFAVSGPLDNQNLGLSPFYEIGTIVWIDSNNNDKFEQPSDIGKSNV). 4 consecutive CNA-B domains span residues 5291-5358 (SNVS…FKLT), 5394-5430 (LPGV…PGDY), 5502-5553 (LPGV…QVAQ), and 5608-5644 (LSDI…PGDY). Asn-5513 is a glycosylation site (N-linked (GlcNAc...) asparagine). Residue Asn-5659 is glycosylated (N-linked (GlcNAc...) asparagine). 4 consecutive CNA-B domains span residues 5724–5791 (SDVS…FKLT), 5827–5872 (LPGV…TPIG), 5935–5984 (LPGV…YKQV), and 6041–6077 (VEGI…PGDY). The N-linked (GlcNAc...) asparagine glycan is linked to Asn-5946. Asn-6092 and Asn-6155 each carry an N-linked (GlcNAc...) asparagine glycan. 4 CNA-B domains span residues 6154–6221 (SNVS…FKLT), 6257–6302 (LPGV…TPIG), 6365–6416 (LPGV…QDAQ), and 6471–6507 (LSDI…PGDY). Asn-6376 carries an N-linked (GlcNAc...) asparagine glycan. Asn-6522 and Asn-6535 each carry an N-linked (GlcNAc...) asparagine glycan. 4 consecutive CNA-B domains span residues 6587-6654 (SDVS…FKLT), 6690-6726 (LEGV…PGDY), 6798-6849 (LPGV…QVNQ), and 6904-6940 (VEGI…PGDY). N-linked (GlcNAc...) asparagine glycans are attached at residues Asn-6701, Asn-6809, and Asn-6848. Residues Asn-6954, Asn-7080, Asn-7137, and Asn-7245 are each glycosylated (N-linked (GlcNAc...) asparagine). CNA-B domains lie at 7023-7090 (SDVS…FKLT), 7126-7171 (LAGV…TPIG), 7234-7285 (LPGV…QDAQ), 7340-7411 (LSDI…VTVK), 7456-7523 (SDVS…FKLT), 7559-7596 (LPGV…PGDY), 7668-7719 (LTGV…QVAQ), and 7774-7810 (VEGI…PGDY). Residues 7351–7372 (DGNEITNTKSGPDGKYQFEDVP) form a disordered region. 2 N-linked (GlcNAc...) asparagine glycosylation sites follow: Asn-7391 and Asn-7404. N-linked (GlcNAc...) asparagine glycosylation occurs at Asn-7679. Asn-7825 and Asn-7837 each carry an N-linked (GlcNAc...) asparagine glycan. 7 consecutive CNA-B domains span residues 7887 to 7954 (SDVS…FKLT), 7990 to 8035 (LPGV…TPIG), 8098 to 8149 (LPGV…QVAQ), 8204 to 8265 (IPNI…FSLS), 8313 to 8374 (VGKS…VVDQ), 8420 to 8456 (LPGV…QGDY), and 8528 to 8587 (LPGI…PFDS). N-linked (GlcNAc...) asparagine glycans are attached at residues Asn-8109 and Asn-8255. N-linked (GlcNAc...) asparagine glycosylation is found at Asn-8441, Asn-8539, Asn-8629, Asn-8636, Asn-8655, Asn-8693, Asn-8753, Asn-8811, Asn-8896, Asn-8930, Asn-8976, Asn-9023, Asn-9073, Asn-9087, Asn-9123, Asn-9137, Asn-9146, Asn-9149, Asn-9186, Asn-9297, Asn-9305, Asn-9349, Asn-9409, Asn-9419, Asn-9533, Asn-9543, Asn-9556, Asn-9601, Asn-9709, Asn-9718, Asn-9786, Asn-9839, Asn-9850, Asn-9867, Asn-9891, Asn-9941, Asn-9957, Asn-9989, Asn-10042, Asn-10096, Asn-10111, Asn-10174, Asn-10267, Asn-10315, Asn-10348, Asn-10360, Asn-10379, Asn-10394, Asn-10431, Asn-10477, Asn-10552, Asn-10581, Asn-10715, Asn-10786, Asn-10802, Asn-10943, and Asn-11018. One copy of the Kelch 4 repeat lies at 8592–8638 (CFDLLDKSITNANLGLIPLYNIGSDAWLDNLNNGVRRNDSLLVPNVT). The CNA-B 77 domain maps to 8634–8680 (VPNVTMSLYDNNGNLIETTITNSSGKYQFNDIQPGSYCVRATVPSNY). Residues 8751–8810 (LPNVTVQLYDKVSGNILAATRSDDKGGYVVPNLLPSADYCVQFEVPPGYIVVVDSDDSVT) form the CNA-B 78 domain. The 50-residue stretch at 8965-9014 (LPGVSVSLFSPNGTSIANTITDENGKYAFKDQVPGSYCIKMIIPPHYQQV) folds into the CNA-B 79 domain. A CNA-B 80 domain is found at 9071–9107 (VPNITMTLLDSQGKQINSTITNANGFYQFVDVAPGNY). In terms of domain architecture, CNA-B 81 spans 9185–9220 (ANVSLSLVNTGNSEIKTTTTNSQGKYSFGQLLAGNY). In terms of domain architecture, CNA-B 82 spans 9299-9332 (TITLTPNNTALPTQTTTTDVNGNYRFDNLVVGNY). CNA-B domains follow at residues 9407–9447 (LVNI…VVQF) and 9531–9569 (MANI…PGNY). Residues 9659 to 9728 (VEGITVRIYD…ATGYISIDLS (70 aa)) form the CNA-B 85 domain. One can recognise a CNA-B 86 domain in the interval 10044–10103 (TLFNADGSTPNDIFGKPIQMAVTDVNGKYSIPNVPPGSYYMTVSIPPRYIISNFTTTGLV). The region spanning 10172–10236 (LPNVTVLLLN…ITPTKLVSTS (65 aa)) is the CNA-B 87 domain. In terms of domain architecture, CNA-B 88 spans 10313 to 10370 (PGNFTVQLKSANQAVNGGLTTVPIGTVVATSPVAANGSFSIPNLQLGNYTLTLIPPSG).

It belongs to the serine-aspartate repeat-containing protein (SDr) family.

The protein resides in the secreted. The chain is Colossin-A (colA) from Dictyostelium discoideum (Social amoeba).